Here is a 290-residue protein sequence, read N- to C-terminus: ATP synthase gamma chain (290 aa).

It belongs to the ATPase gamma chain family. F-type ATPases have 2 components, CF(1) - the catalytic core - and CF(0) - the membrane proton channel. CF(1) has five subunits: alpha(3), beta(3), gamma(1), delta(1), epsilon(1). CF(0) has three main subunits: a, b and c.

The protein localises to the cell membrane. Functionally, produces ATP from ADP in the presence of a proton gradient across the membrane. The gamma chain is believed to be important in regulating ATPase activity and the flow of protons through the CF(0) complex. The sequence is that of ATP synthase gamma chain from Chloroflexus aurantiacus (strain ATCC 29366 / DSM 635 / J-10-fl).